The following is a 437-amino-acid chain: ATP-dependent RNA helicase SUB2 (437 aa).

Residues methionine 1–valine 19 show a composition bias toward acidic residues. The segment at methionine 1–glycine 45 is disordered. A Q motif motif is present at residues threonine 53–glutamine 81. The region spanning isoleucine 84–isoleucine 259 is the Helicase ATP-binding domain. Residue alanine 97 to threonine 104 coordinates ATP. The short motif at aspartate 206–aspartate 209 is the DECD box element. The Helicase C-terminal domain occupies lysine 287 to serine 432.

The protein belongs to the DEAD box helicase family. DECD subfamily.

It is found in the nucleus. The catalysed reaction is ATP + H2O = ADP + phosphate + H(+). In terms of biological role, ATP-binding RNA helicase involved in transcription elongation and required for the export of mRNA out of the nucleus. SUB2 also plays a role in pre-mRNA splicing and spliceosome assembly. May be involved in rDNA and telomeric silencing, and maintenance of genome integrity. The chain is ATP-dependent RNA helicase SUB2 (SUB2) from Kluyveromyces lactis (strain ATCC 8585 / CBS 2359 / DSM 70799 / NBRC 1267 / NRRL Y-1140 / WM37) (Yeast).